The following is a 55-amino-acid chain: Spermatid nuclear transition protein 1 (55 aa).

The span at 1–42 shows a compositional bias: basic residues; it reads MSTSRKLKSQGMRRGKNRTPHKGVKRSGSKRKYRKSSLKSRK. Residues 1–55 form a disordered region; that stretch reads MSTSRKLKSQGMRRGKNRTPHKGVKRSGSKRKYRKSSLKSRKRCDDANRNLRSHL. A phosphoserine mark is found at S9, S36, S37, and S40.

It belongs to the nuclear transition protein 1 family. Testis.

It localises to the nucleus. It is found in the chromosome. Its function is as follows. Plays a key role in the replacement of histones to protamine in the elongating spermatids of mammals. In condensing spermatids, loaded onto the nucleosomes, where it promotes the recruitment and processing of protamines, which are responsible for histone eviction. The polypeptide is Spermatid nuclear transition protein 1 (TNP1) (Bos taurus (Bovine)).